The following is a 169-amino-acid chain: Cell division inhibitor SulA (169 aa).

The segment at 106–112 is ftsZ binding; the sequence is ALRTGNY. A lon protease binding region spans residues 162–169; the sequence is KIHSNLYH.

It belongs to the SulA family. As to quaternary structure, interacts with FtsZ. In terms of processing, is rapidly cleaved and degraded by the Lon protease once DNA damage is repaired.

In terms of biological role, component of the SOS system and an inhibitor of cell division. Accumulation of SulA causes rapid cessation of cell division and the appearance of long, non-septate filaments. In the presence of GTP, binds a polymerization-competent form of FtsZ in a 1:1 ratio, thus inhibiting FtsZ polymerization and therefore preventing it from participating in the assembly of the Z ring. This mechanism prevents the premature segregation of damaged DNA to daughter cells during cell division. The protein is Cell division inhibitor SulA of Shigella flexneri serotype 5b (strain 8401).